A 182-amino-acid chain; its full sequence is Endoribonuclease YbeY (182 aa).

Positions 115, 119, and 125 each coordinate Zn(2+).

The protein belongs to the endoribonuclease YbeY family. The cofactor is Zn(2+).

The protein resides in the cytoplasm. Its function is as follows. Single strand-specific metallo-endoribonuclease involved in late-stage 70S ribosome quality control and in maturation of the 3' terminus of the 16S rRNA. The chain is Endoribonuclease YbeY from Bifidobacterium longum subsp. infantis (strain ATCC 15697 / DSM 20088 / JCM 1222 / NCTC 11817 / S12).